Reading from the N-terminus, the 1150-residue chain is BAI1-associated protein 3 (1150 aa).

Residues 22-44 (RRKTEQEPEVTNSQEPPTGAWKP) are disordered. The region spanning 139–298 (SSEEHMEAIM…VKSARANGTA (160 aa)) is the C2 1 domain. Ca(2+) is bound by residues aspartate 174 and aspartate 180. Residues 193–214 (APQEPSGQKEQRFGFRKGSKRS) are disordered. Residues aspartate 258 and aspartate 260 each contribute to the Ca(2+) site. Positions 626 to 747 (FELYLTLADT…EASLFYTELL (122 aa)) constitute an MHD1 domain. Residues 851 to 959 (DEAVAPLLKY…CSTRECIEQF (109 aa)) form the MHD2 domain. In terms of domain architecture, C2 2 spans 973–1099 (RFGRLTVRCH…GIARPHVGGG (127 aa)). Residues leucine 1003, aspartate 1004, aspartate 1010, aspartate 1068, aspartate 1070, serine 1073, and aspartate 1076 each contribute to the Ca(2+) site.

The protein belongs to the unc-13 family. As to quaternary structure, interacts with ADGRB1, this interaction is direct. Interacts with endosomal SNARE proteins VAMP3, VAMP4, STX6 and STX16; this interaction is increased in the presence of calcium. Ca(2+) serves as cofactor. Prominently expressed in brain structures including hypothalamus, amygdala, stria terminalis and periaqueductal gray (at protein level). Expressed in nonneuronal tissues, including placenta, lung, pancreas, spleen, and testes. Within placenta, expression is restricted to the syncytiotrophoblasts.

The protein resides in the cytoplasm. It localises to the cytosol. Its subcellular location is the recycling endosome membrane. The protein localises to the late endosome membrane. It is found in the golgi apparatus. The protein resides in the trans-Golgi network membrane. It localises to the cell membrane. Its function is as follows. Functions in endosome to Golgi retrograde transport. In response to calcium influx, may interact with SNARE fusion receptors and membrane phospholipids to mediate endosome fusion with the trans-Golgi network. By promoting the recycling of secretory vesicle transmembrane proteins, it indirectly controls dense-core secretory vesicle biogenesis, maturation and their ability to mediate the constitutive and regulated secretion of neurotransmitters and hormones. May regulate behavior and food intake by controlling calcium-stimulated exocytosis of neurotransmitters including NPY and serotonin and hormones like insulin. Proposed to play a role in hypothalamic neuronal firing by modulating gamma-aminobutyric acid (GABA)ergic inhibitory neurotransmission. This chain is BAI1-associated protein 3, found in Mus musculus (Mouse).